The primary structure comprises 363 residues: Biotin synthase (363 aa).

The 229-residue stretch at 38-266 (NTVQVSTLLS…ETQVRLSAGR (229 aa)) folds into the Radical SAM core domain. Cysteine 53, cysteine 57, and cysteine 60 together coordinate [4Fe-4S] cluster. 4 residues coordinate [2Fe-2S] cluster: cysteine 97, cysteine 129, cysteine 189, and arginine 261. Residues 315–363 (KAFEKKSQPESVAAEKSKYQSQGEKPRWSRPEHKIDRNLEAQQNAKTKA) form a disordered region. Basic and acidic residues predominate over residues 316 to 353 (AFEKKSQPESVAAEKSKYQSQGEKPRWSRPEHKIDRNL). Over residues 354–363 (EAQQNAKTKA) the composition is skewed to polar residues.

This sequence belongs to the radical SAM superfamily. Biotin synthase family. In terms of assembly, homodimer. The cofactor is [4Fe-4S] cluster. [2Fe-2S] cluster is required as a cofactor.

It catalyses the reaction (4R,5S)-dethiobiotin + (sulfur carrier)-SH + 2 reduced [2Fe-2S]-[ferredoxin] + 2 S-adenosyl-L-methionine = (sulfur carrier)-H + biotin + 2 5'-deoxyadenosine + 2 L-methionine + 2 oxidized [2Fe-2S]-[ferredoxin]. It functions in the pathway cofactor biosynthesis; biotin biosynthesis; biotin from 7,8-diaminononanoate: step 2/2. Catalyzes the conversion of dethiobiotin (DTB) to biotin by the insertion of a sulfur atom into dethiobiotin via a radical-based mechanism. This chain is Biotin synthase, found in Christiangramia forsetii (strain DSM 17595 / CGMCC 1.15422 / KT0803) (Gramella forsetii).